The chain runs to 83 residues: Cytochrome b559 subunit alpha (83 aa).

Residues 21–35 (IIHSITIPSLFIAGW) traverse the membrane as a helical segment. Histidine 23 contacts heme.

In terms of assembly, heterodimer of an alpha subunit and a beta subunit. PSII is composed of 1 copy each of membrane proteins PsbA, PsbB, PsbC, PsbD, PsbE, PsbF, PsbH, PsbI, PsbJ, PsbK, PsbL, PsbM, PsbT, PsbX, PsbY, PsbZ, Psb30/Ycf12, at least 3 peripheral proteins of the oxygen-evolving complex and a large number of cofactors. It forms dimeric complexes. It depends on heme b as a cofactor.

Its subcellular location is the plastid. It localises to the chloroplast thylakoid membrane. This b-type cytochrome is tightly associated with the reaction center of photosystem II (PSII). PSII is a light-driven water:plastoquinone oxidoreductase that uses light energy to abstract electrons from H(2)O, generating O(2) and a proton gradient subsequently used for ATP formation. It consists of a core antenna complex that captures photons, and an electron transfer chain that converts photonic excitation into a charge separation. This chain is Cytochrome b559 subunit alpha, found in Pisum sativum (Garden pea).